The sequence spans 222 residues: N-acetyltransferase 8F1 (222 aa).

Residues 53–73 (LVLVSGSWILAVICIFFLLLL) form a helical membrane-spanning segment. The N-acetyltransferase domain maps to 69 to 220 (FLLLLLRLLA…CTIQLKYSFP (152 aa)).

The protein belongs to the camello family.

Its subcellular location is the membrane. May play a role in regulation of gastrulation. This chain is N-acetyltransferase 8F1, found in Mus musculus (Mouse).